Reading from the N-terminus, the 303-residue chain is Pseudouridine-5'-phosphate glycosidase (303 aa).

Catalysis depends on Glu24, which acts as the Proton donor. 2 residues coordinate substrate: Lys85 and Val105. A Mn(2+)-binding site is contributed by Asp137. Residue 139–141 (SAD) participates in substrate binding. Lys158 serves as the catalytic Nucleophile.

The protein belongs to the pseudouridine-5'-phosphate glycosidase family. Homotrimer. The cofactor is Mn(2+).

The enzyme catalyses D-ribose 5-phosphate + uracil = psi-UMP + H2O. Functionally, catalyzes the reversible cleavage of pseudouridine 5'-phosphate (PsiMP) to ribose 5-phosphate and uracil. Functions biologically in the cleavage direction, as part of a pseudouridine degradation pathway. This Herpetosiphon aurantiacus (strain ATCC 23779 / DSM 785 / 114-95) protein is Pseudouridine-5'-phosphate glycosidase.